The chain runs to 553 residues: Tether containing UBX domain for GLUT4 (553 aa).

Residue A2 is modified to N-acetylalanine. Residues 182–202 show a composition bias toward low complexity; the sequence is PGSLGSSASAGQAAASAPLPL. A disordered region spans residues 182-324; it reads PGSLGSSASA…REPVDREPVV (143 aa). Residue S184 is modified to Phosphoserine. Basic and acidic residues predominate over residues 206 to 217; the sequence is ELSRGDLSRPED. Over residues 260-280 the composition is skewed to low complexity; sequence RPLTSSSAKLPKSLSSPGGPS. Phosphoserine is present on S275. Positions 296-324 are enriched in basic and acidic residues; it reads EQERERDPQQEQERERPVDREPVDREPVV. The segment at 317 to 380 is interaction with GLUT4; the sequence is PVDREPVVCH…LVTKAFREAQ (64 aa). A UBX domain is found at 386–462; it reads ERYPKVALRV…NLFPAALVHL (77 aa). Positions 499 to 536 are disordered; that stretch reads GSPSPLPAPDPAPKSEPAAEEGALVPPEPIPGTAQPVK. S500 and S502 each carry phosphoserine. Residues 502 to 512 show a composition bias toward pro residues; that stretch reads SPLPAPDPAPK.

As to quaternary structure, interacts with GLUT4. Interacts with VCPKMT. Interacts with VCP. Ubiquitous. Highly expressed in testis, heart, skeletal muscle and pancreas.

It is found in the endomembrane system. Its subcellular location is the endoplasmic reticulum-Golgi intermediate compartment membrane. The protein resides in the cytoplasm. The protein localises to the nucleus. Functionally, tethering protein that sequesters GLUT4-containing vesicles in the cytoplasm in the absence of insulin. Modulates the amount of GLUT4 that is available at the cell surface. Enhances VCP methylation catalyzed by VCPKMT. This is Tether containing UBX domain for GLUT4 (ASPSCR1) from Homo sapiens (Human).